Consider the following 131-residue polypeptide: Snaclec A8 (131 aa).

3 cysteine pairs are disulfide-bonded: Cys-2-Cys-13, Cys-30-Cys-129, and Cys-104-Cys-121. The C-type lectin domain maps to 9-130 (HEGHCYKVFN…CGQPYRFTCE (122 aa)).

Belongs to the snaclec family. As to quaternary structure, heterodimer; disulfide-linked. In terms of tissue distribution, expressed by the venom gland.

It localises to the secreted. In terms of biological role, interferes with one step of hemostasis (modulation of platelet aggregation, or coagulation cascade, for example). The sequence is that of Snaclec A8 from Macrovipera lebetinus (Levantine viper).